We begin with the raw amino-acid sequence, 678 residues long: MDVPSSSSSRFSVGSASPSSVLLYAKDLKKWDEFEDLLEERRHISDFKFAMKCYTPPLYRGITPCKPGDIKSIVLSSEEINYVIKQLSRESLTGVDVLREEASEILEEMSHKLRIGAIRFFAFVLSKIFKQIFSKVCVNEEGIQKLQRAVQEHPVVLLPSHRSYIDFLMLSFILYSYDLPVPVIAAGMDFLGMRVVSELLRMSGAFFMRRTFGGNKLYWAVFSEYVKTMLRCGYAPVEFFLEGTRSRAAKTLTPKFGLLNIVMEPFFKREVFDTYFVPISISYDKILEESLYAYEILGVPKPKESTTGLLKARRILSENFGSIHVYFGDPVSLRSLAAGRLNRNTYNLVPRCIPQKQPEDVQAFVTEVAYKMQLLQIENLALSPWLLVVTILLQNQLSMDFDALVEKTLWLKGVTQVFGGFLLWPDNKLPEEVVQSSILLHSNLASLVKDQVVLKMNSGSSQVVNGLVPEHIALLMCSAYRNQLLNIFARPSLVALALHMTPGLRKEDVFSCFSFLRNVFSDEFIFLPGNTLRDFEEGCYLLCKAEAMQMAGKDIILTDKGTAVLQFLTSLFKPFVESYQLLCRYLLHEEDYFGEKEYLVAARKFTRQLLDQGSSQCYDALSSELQKNALAAFVRLGVVEKKKVDSKYVYYVNGPATSKLEEMLGCKKPIGKPATAKL.

Ser-12 and Ser-17 each carry phosphoserine. The HXXXXD motif signature appears at 161–166; sequence HRSYID. The residue at position 641 (Lys-641) is an N6-acetyllysine. Positions 676–678 match the Microbody targeting signal motif; the sequence is AKL.

It belongs to the GPAT/DAPAT family. In terms of assembly, part of a heterotrimeric complex composed of GNPAT, AGPS and a modified form of GNPAT. As to expression, highly expressed in liver and testis. Lower levels in heart, brain, lung and kidney. Detected in spleen.

It is found in the peroxisome membrane. It catalyses the reaction dihydroxyacetone phosphate + an acyl-CoA = a 1-acylglycerone 3-phosphate + CoA. The catalysed reaction is dihydroxyacetone phosphate + hexadecanoyl-CoA = 1-hexadecanoylglycerone 3-phosphate + CoA. Its pathway is membrane lipid metabolism; glycerophospholipid metabolism. Dihydroxyacetonephosphate acyltransferase catalyzing the first step in the biosynthesis of plasmalogens, a subset of phospholipids that differ from other glycerolipids by having an alkyl chain attached through a vinyl ether linkage at the sn-1 position of the glycerol backbone, and which unique physical properties have an impact on various aspects of cell signaling and membrane biology. This chain is Dihydroxyacetone phosphate acyltransferase, found in Mus musculus (Mouse).